A 537-amino-acid polypeptide reads, in one-letter code: Pentatricopeptide repeat-containing protein At1g02370, mitochondrial (537 aa).

A mitochondrion-targeting transit peptide spans 1 to 18 (MNFRNLIASGSRLGKRFC). PPR repeat units follow at residues 171–205 (HQST…NFVN), 206–240 (NSLP…GISP), 241–275 (CGVT…SEAK), 277–307 (TWNT…MEEK), 312–346 (NRDS…RPEV), 347–377 (NNLS…WESK), and 382–416 (DMRL…SKGP).

Belongs to the PPR family. P subfamily.

It localises to the mitochondrion. The chain is Pentatricopeptide repeat-containing protein At1g02370, mitochondrial from Arabidopsis thaliana (Mouse-ear cress).